The following is a 400-amino-acid chain: Acetate kinase (400 aa).

Asn10 is a binding site for Mg(2+). Lys17 is a binding site for ATP. A substrate-binding site is contributed by Arg91. The Proton donor/acceptor role is filled by Asp148. ATP contacts are provided by residues 208–212 (HLGNG), 283–285 (DCR), and 331–335 (GIGEN). Residue Glu385 participates in Mg(2+) binding.

The protein belongs to the acetokinase family. As to quaternary structure, homodimer. Mg(2+) serves as cofactor. The cofactor is Mn(2+).

It localises to the cytoplasm. The enzyme catalyses acetate + ATP = acetyl phosphate + ADP. It functions in the pathway metabolic intermediate biosynthesis; acetyl-CoA biosynthesis; acetyl-CoA from acetate: step 1/2. In terms of biological role, catalyzes the formation of acetyl phosphate from acetate and ATP. Can also catalyze the reverse reaction. In Shewanella frigidimarina (strain NCIMB 400), this protein is Acetate kinase.